We begin with the raw amino-acid sequence, 554 residues long: Hydroxylamine reductase (554 aa).

Residues Cys3, Cys6, Cys18, and Cys25 each coordinate [2Fe-2S] cluster. Hybrid [4Fe-2O-2S] cluster is bound by residues His252, Glu276, Cys320, Cys408, Cys436, Cys461, Glu495, and Lys497. A Cysteine persulfide modification is found at Cys408.

The protein belongs to the HCP family. It depends on [2Fe-2S] cluster as a cofactor. The cofactor is hybrid [4Fe-2O-2S] cluster.

Its subcellular location is the cytoplasm. It carries out the reaction A + NH4(+) + H2O = hydroxylamine + AH2 + H(+). Functionally, catalyzes the reduction of hydroxylamine to form NH(3) and H(2)O. This is Hydroxylamine reductase from Shewanella baltica (strain OS223).